The primary structure comprises 319 residues: Methionyl-tRNA formyltransferase (319 aa).

Position 112–115 (112–115) interacts with (6S)-5,6,7,8-tetrahydrofolate; the sequence is SILP.

This sequence belongs to the Fmt family.

The catalysed reaction is L-methionyl-tRNA(fMet) + (6R)-10-formyltetrahydrofolate = N-formyl-L-methionyl-tRNA(fMet) + (6S)-5,6,7,8-tetrahydrofolate + H(+). Functionally, attaches a formyl group to the free amino group of methionyl-tRNA(fMet). The formyl group appears to play a dual role in the initiator identity of N-formylmethionyl-tRNA by promoting its recognition by IF2 and preventing the misappropriation of this tRNA by the elongation apparatus. In Shewanella denitrificans (strain OS217 / ATCC BAA-1090 / DSM 15013), this protein is Methionyl-tRNA formyltransferase.